An 824-amino-acid chain; its full sequence is Lon protease (824 aa).

The disordered stretch occupies residues 1-23 (MNEPMSLFDDLPEEHDEPQEAPE). Residues 10–20 (DLPEEHDEPQE) show a composition bias toward acidic residues. A Lon N-terminal domain is found at 26-222 (LPMVVLGEMV…KVYLVLARQL (197 aa)). An ATP-binding site is contributed by 375 to 382 (GPPGVGKT). Positions 617-798 (QDEVGVATGV…DEVLRIALSR (182 aa)) constitute a Lon proteolytic domain. Active-site residues include S704 and K747. The segment at 800–824 (PTPANNQNGSHTNNRGQPSPAPAGT) is disordered. The segment covering 802–816 (PANNQNGSHTNNRGQ) has biased composition (polar residues).

This sequence belongs to the peptidase S16 family. As to quaternary structure, homohexamer. Organized in a ring with a central cavity.

It is found in the cytoplasm. The enzyme catalyses Hydrolysis of proteins in presence of ATP.. ATP-dependent serine protease that mediates the selective degradation of mutant and abnormal proteins as well as certain short-lived regulatory proteins. Required for cellular homeostasis and for survival from DNA damage and developmental changes induced by stress. Degrades polypeptides processively to yield small peptide fragments that are 5 to 10 amino acids long. Binds to DNA in a double-stranded, site-specific manner. The chain is Lon protease from Chloroflexus aggregans (strain MD-66 / DSM 9485).